The following is an 827-amino-acid chain: Inactive rhomboid protein 2 (827 aa).

A disordered region spans residues 1–87 (MDSTDKNGES…GFRRQASLSQ (87 aa)). The Cytoplasmic portion of the chain corresponds to 1-380 (MDSTDKNGES…HRPYFTYWLT (380 aa)). Serine 60 is modified (phosphoserine). The segment covering 64-77 (QRGRWQEGSSEKRP) has biased composition (basic and acidic residues). Residues serine 84, serine 88, serine 294, serine 296, and serine 299 each carry the phosphoserine modification. A helical transmembrane segment spans residues 381-401 (FVHIIITLLVICTYGIAPVGF). The Lumenal portion of the chain corresponds to 402–631 (AQHVTTQLVL…PDQFYRLWLS (230 aa)). Residues 632–652 (LFLHAGVVHCLVSVVFQMTIL) form a helical membrane-spanning segment. Topologically, residues 653-663 (RDLEKLAGWHR) are cytoplasmic. A helical membrane pass occupies residues 664-684 (IAIIFILSGITGNLASAIFLP). At 685 to 686 (YR) the chain is on the lumenal side. Residues 687-707 (AEVGPAGSQFGLLACLFVELF) form a helical membrane-spanning segment. Residues 708 to 718 (QSWQLLERPWK) are Cytoplasmic-facing. Residues 719–739 (AFLNLSAIVLFLFICGLLPWI) form a helical membrane-spanning segment. Residues 740–744 (DNIAH) are Lumenal-facing. The helical transmembrane segment at 745-765 (IFGFLSGLLLAFAFLPYITFG) threads the bilayer. Over 766-773 (TSDKYRKR) the chain is Cytoplasmic. A helical membrane pass occupies residues 774–794 (ALILVSLLVFAGLFASLVIWL). Over 795-827 (YVYPINWPWIEYLTCFPFTSRFCEKYELDQVLH) the chain is Lumenal.

The protein belongs to the peptidase S54 family. In terms of assembly, interacts with EGF. Interacts (via cytoplasmic N-terminus) with FRMD8/iTAP; this interaction leads to mutual protein stabilization. Interacts with ADAM17/TACE. Detected in retina and spleen.

The protein localises to the endoplasmic reticulum membrane. Its subcellular location is the cell membrane. In terms of biological role, regulates ADAM17 protease, a sheddase of the epidermal growth factor (EGF) receptor ligands and TNF, thereby plays a role in sleep, cell survival, proliferation, migration and inflammation. Does not exhibit any protease activity on its own. The protein is Inactive rhomboid protein 2 (RHBDF2) of Canis lupus familiaris (Dog).